Here is a 473-residue protein sequence, read N- to C-terminus: Sphingosine kinase 1 (473 aa).

The 151-residue stretch at 83–233 folds into the DAGKc domain; sequence QCRGNLLVFI…VALYSVKTDN (151 aa). ATP is bound by residues 93–95 and 125–129; these read NPN and TTGPN. Residue 151–154 participates in substrate binding; the sequence is SGDG. Asp153 (proton donor/acceptor) is an active-site residue. Residues Glu158 and 184–186 contribute to the ATP site; that span reads GSG. Asp251 lines the substrate pocket. Residues Arg258, Arg265, and 448-450 each bind ATP; that span reads DGE.

It depends on Mg(2+) as a cofactor. Expressed in the majority of cholinergic and GABAergic neurons, body wall muscle, excretory canal cells, intestine, and hypodermis.

The protein localises to the presynaptic cell membrane. The protein resides in the cell projection. It is found in the axon. It localises to the perikaryon. Its subcellular location is the mitochondrion membrane. The catalysed reaction is a sphingoid base + ATP = a sphingoid 1-phosphate + ADP + H(+). It catalyses the reaction 15-methylhexadecasphing-4-enine + ATP = 15-methylhexadecasphing-4-enine 1-phosphate + ADP + H(+). It carries out the reaction 15-methylhexadecasphinganine + ATP = 15-methylhexadecasphinganine 1-phosphate + ADP + H(+). It functions in the pathway lipid metabolism; sphingolipid metabolism. Functionally, catalyzes the phosphorylation of sphingoid bases to form sphingoid 1-phosphate (SPP), which have both intra- and extracellular functions. C.elegans contain specific sphingoid bases, which are unique or different in structure compared to the sphingoid bases found in other animals. Two examples of these distinctive compounds are: 15-methylhexadecasphinganine and 15-methylhexadecasphing-4-enine. Required for neurotransmitter release from neuromuscular junctions. Acts by recruiting the synaptic vesicle priming protein unc-13 to synapses. This chain is Sphingosine kinase 1 (sphk-1), found in Caenorhabditis elegans.